The sequence spans 365 residues: Galactoside alpha-(1,2)-fucosyltransferase 1 (365 aa).

Topologically, residues 1-8 are cytoplasmic; sequence MWVPSRRH. A helical; Signal-anchor for type II membrane protein membrane pass occupies residues 9–28; sequence LCLTFLLVCVLAAIFFLNVY. Residues 29-365 are Lumenal-facing; sequence QDLFYSGLDL…LSPLQMLAGP (337 aa). N-linked (GlcNAc...) asparagine glycans are attached at residues Asn65, Asn301, and Asn327.

This sequence belongs to the glycosyltransferase 11 family.

The protein localises to the golgi apparatus. It is found in the golgi stack membrane. The enzyme catalyses a beta-D-galactosyl-(1-&gt;4)-N-acetyl-beta-D-glucosaminyl derivative + GDP-beta-L-fucose = an alpha-L-Fuc-(1-&gt;2)-beta-D-Gal-(1-&gt;4)-beta-D-GlcNAc derivative + GDP + H(+). It catalyses the reaction a ganglioside GA1 + GDP-beta-L-fucose = a ganglioside Fuc-GA1 + GDP + H(+). The catalysed reaction is a beta-D-Gal-(1-&gt;3)-beta-D-GlcNAc-(1-&gt;3)-beta-D-Gal-(1-&gt;4)-beta-D-Glc-(1&lt;-&gt;1')-Cer(d18:1(4E)) + GDP-beta-L-fucose = alpha-L-fucosyl-(1-&gt;2)- beta-D-galactosyl-(1-&gt;3)-N-acetyl-beta-D-glucosaminyl-(1-&gt;3)-beta-D-galactosyl-(1-&gt;4)-beta-D-glucosyl-(1&lt;-&gt;1')-N-acylsphing-4-enine + GDP + H(+). It carries out the reaction a neolactoside nLc4Cer(d18:1(4E)) + GDP-beta-L-fucose = a neolactoside IV(2)-alpha-Fuc-nLc4Cer(d18:1(4E)) + GDP + H(+). The enzyme catalyses a ganglioside GM1 + GDP-beta-L-fucose = a ganglioside Fuc-GM1 + GDP + H(+). It catalyses the reaction beta-D-galactosyl-(1-&gt;3)-N-acetyl-D-galactosamine + GDP-beta-L-fucose = alpha-L-fucosyl-(1-&gt;2)-beta-D-galactosyl-(1-&gt;3)-N-acetyl-D-galactosamine + GDP + H(+). The protein operates within protein modification; protein glycosylation. Its function is as follows. Catalyzes the transfer of L-fucose, from a guanosine diphosphate-beta-L-fucose, to the terminal galactose residue of glycoconjugates through an alpha(1,2) linkage leading to H antigen synthesis that is an intermediate substrate in the synthesis of ABO blood group antigens. H antigen is essential for maturation of the glomerular layer of the main olfactory bulb, in cell migration and early cell-cell contacts during tumor associated angiogenesis. Preferentially fucosylates soluble lactose and to a lesser extent fucosylates glycolipids gangliosides GA1 and GM1a. In Sus scrofa (Pig), this protein is Galactoside alpha-(1,2)-fucosyltransferase 1.